Consider the following 249-residue polypeptide: Phosphate import ATP-binding protein PstB (249 aa).

The ABC transporter domain occupies 4–244 (VKIKDLSLFY…PQDKRTEDYI (241 aa)). 36–43 (GPSGCGKS) provides a ligand contact to ATP.

Belongs to the ABC transporter superfamily. Phosphate importer (TC 3.A.1.7) family. As to quaternary structure, the complex is composed of two ATP-binding proteins (PstB), two transmembrane proteins (PstC and PstA) and a solute-binding protein (PstS).

The protein resides in the cell membrane. It carries out the reaction phosphate(out) + ATP + H2O = ADP + 2 phosphate(in) + H(+). In terms of biological role, part of the ABC transporter complex PstSACB involved in phosphate import. Responsible for energy coupling to the transport system. In Clostridium tetani (strain Massachusetts / E88), this protein is Phosphate import ATP-binding protein PstB.